Reading from the N-terminus, the 323-residue chain is Transaldolase (323 aa).

Lys-131 (schiff-base intermediate with substrate) is an active-site residue.

This sequence belongs to the transaldolase family. Type 1 subfamily. Homodimer.

It is found in the cytoplasm. The catalysed reaction is D-sedoheptulose 7-phosphate + D-glyceraldehyde 3-phosphate = D-erythrose 4-phosphate + beta-D-fructose 6-phosphate. The protein operates within carbohydrate degradation; pentose phosphate pathway; D-glyceraldehyde 3-phosphate and beta-D-fructose 6-phosphate from D-ribose 5-phosphate and D-xylulose 5-phosphate (non-oxidative stage): step 2/3. In terms of biological role, transaldolase is important for the balance of metabolites in the pentose-phosphate pathway. This chain is Transaldolase, found in Blochmanniella floridana.